The primary structure comprises 664 residues: Zinc finger protein 800 (664 aa).

Residues 69–91 (FECKLCRSLFRGLPNLITHKKFY) form a C2H2-type 1; degenerate zinc finger. Lys-132 participates in a covalent cross-link: Glycyl lysine isopeptide (Lys-Gly) (interchain with G-Cter in SUMO2). 2 stretches are compositionally biased toward polar residues: residues 154–179 (IEVT…EQSK) and 207–224 (SDEQ…SDNS). The interval 154–224 (IEVTESSSTP…QADLETSDNS (71 aa)) is disordered. The C2H2-type 2 zinc-finger motif lies at 230 to 253 (LICCLCRKEFNSRRGVRRHIRKVH). A Glycyl lysine isopeptide (Lys-Gly) (interchain with G-Cter in SUMO2) cross-link involves residue Lys-279. A C2H2-type 3 zinc finger spans residues 287–310 (RSCPVCCKSFATKANVRRHFDEVH). A Phosphoserine modification is found at Ser-317. Residue Thr-319 is modified to Phosphothreonine. The segment at 328–349 (QPLFLDSISPKKSFKTRKQKSS) is disordered. The residue at position 336 (Ser-336) is a Phosphoserine. Residues 339–348 (KSFKTRKQKS) show a composition bias toward basic residues. The C2H2-type 4 zinc-finger motif lies at 357-382 (TACKCLLCKRKYSSQIMLKRHMQIVH). The segment at 388 to 476 (GTNSKREKGP…GGQQKTRKPK (89 aa)) is disordered. Lys-392 participates in a covalent cross-link: Glycyl lysine isopeptide (Lys-Gly) (interchain with G-Cter in SUMO2). Lys-409 is covalently cross-linked (Glycyl lysine isopeptide (Lys-Gly) (interchain with G-Cter in SUMO1); alternate). Lys-409 is covalently cross-linked (Glycyl lysine isopeptide (Lys-Gly) (interchain with G-Cter in SUMO2); alternate). Over residues 416–436 (VESSPPSITHSPQNELKGTNH) the composition is skewed to polar residues. Ser-422, Ser-426, Ser-455, Ser-457, Ser-460, and Ser-462 each carry phosphoserine. Positions 458-470 (PKSTSPSAAGGQQ) are enriched in polar residues. Residue Lys-476 forms a Glycyl lysine isopeptide (Lys-Gly) (interchain with G-Cter in SUMO2) linkage. C2H2-type zinc fingers lie at residues 486–508 (LYCK…IELH) and 519–542 (YKCP…TVVH). Disordered stretches follow at residues 574 to 599 (KRGP…PSKK) and 635 to 664 (HHKK…KALV). Basic and acidic residues predominate over residues 577 to 591 (PSRDEAKHSDSKHDG). Lys-599 participates in a covalent cross-link: Glycyl lysine isopeptide (Lys-Gly) (interchain with G-Cter in SUMO2). Residues 618–640 (HRCNKCGKAFAKKTYLEHHKKTH) form a C2H2-type 7 zinc finger. Residues 653–664 (TKGRSTRSKALV) are compositionally biased toward basic residues.

It belongs to the krueppel C2H2-type zinc-finger protein family.

It is found in the nucleus. Functionally, may be involved in transcriptional regulation. This Homo sapiens (Human) protein is Zinc finger protein 800 (ZNF800).